Here is an 809-residue protein sequence, read N- to C-terminus: TLR4 interactor with leucine rich repeats (809 aa).

Residues 1–25 form the signal peptide; the sequence is MEGVGAVRFWLVVCGCLAFPPRAES. The region spanning 26–57 is the LRRNT domain; that stretch reads VCPERCDCQHPQHLLCTNRGLRAVPKTSSLPS. Residues 26-694 are Extracellular-facing; the sequence is VCPERCDCQH…AGGRGGVDYQ (669 aa). LRR repeat units follow at residues 61–81, 84–105, 108–129, 132–153, 156–177, 180–201, 204–223, 230–251, 254–275, 278–298, 302–323, and 326–347; these read VLTY…DFHR, QLRR…TFEK, RLEE…TLAP, KLRI…SFEG, SLVK…VFAP, NLLY…AFSQ, KLRF…RHAA, SLST…VFQH, RLGL…AFWG, ALRE…TLLE, SLEA…TFGH, and RLRE…IFAA. N-linked (GlcNAc...) asparagine glycosylation occurs at N73. The region spanning 359–416 is the LRRCT domain; that stretch reads NGWTCDCRLRGLKRWMGNWHSQGRLLTVFVQCRHPPALRGKYLDYLDDQLLQNGSCVD. A glycan (N-linked (GlcNAc...) asparagine) is linked at N411. 2 disordered regions span residues 412–462 and 483–563; these read GSCV…RGRL and RLSR…SAVQ. A compositionally biased stretch (polar residues) spans 421–436; it reads PTAGSRQWPLPTSSEE. Low complexity predominate over residues 488-506; it reads GPGPHQGPSAAAPGSAPQS. The segment covering 521–543 has biased composition (polar residues); that stretch reads ANLSQTEPTPTSEPASGTPSARD. Residues 554 to 563 are compositionally biased toward low complexity; the sequence is ASEQQESAVQ. N587 carries an N-linked (GlcNAc...) asparagine glycan. A helical membrane pass occupies residues 695–715; that stretch reads LLTLVLLAVNALLVLLALAAW. The Cytoplasmic segment spans residues 716–809; the sequence is GSRWLRRKLR…EDHLLQRFAD (94 aa). At S796 the chain carries Phosphoserine.

Belongs to the lipopolysaccharide (LPS) receptor, a multi-protein complex containing at least CD14, MD-2 and TLR4. Interacts with TLR4; this interaction is greatly enhanced by LPS stimulation. Interacts with LPS. In terms of processing, N-glycolysaled. Highly expressed in brain, spinal cord and lung.

The protein resides in the membrane. Component of the TLR4 signaling complex. Mediates the innate immune response to bacterial lipopolysaccharide (LPS) leading to cytokine secretion. This chain is TLR4 interactor with leucine rich repeats (Tril), found in Mus musculus (Mouse).